A 625-amino-acid chain; its full sequence is Acetolactate synthase (625 aa).

Positions 1-29 (MSAPTKPHARPQGAGNSVPNTVKPATQFP) are disordered. Residues 14–29 (AGNSVPNTVKPATQFP) show a composition bias toward polar residues. Residue Glu-92 participates in thiamine diphosphate binding. FAD is bound by residues Arg-194, 300–321 (HGTV…LGTR), and 343–362 (DIDP…IVGD). The segment at 436–516 (QHQMWAAQFI…IKVALINNGN (81 aa)) is thiamine pyrophosphate binding. 2 residues coordinate Mg(2+): Asp-487 and Asn-514.

It belongs to the TPP enzyme family. It depends on Mg(2+) as a cofactor. Thiamine diphosphate is required as a cofactor.

It catalyses the reaction 2 pyruvate + H(+) = (2S)-2-acetolactate + CO2. It functions in the pathway amino-acid biosynthesis; L-isoleucine biosynthesis; L-isoleucine from 2-oxobutanoate: step 1/4. It participates in amino-acid biosynthesis; L-valine biosynthesis; L-valine from pyruvate: step 1/4. This chain is Acetolactate synthase (ilvB), found in Mycobacterium leprae (strain TN).